The primary structure comprises 119 residues: Ribonuclease P protein component (119 aa).

It belongs to the RnpA family. In terms of assembly, consists of a catalytic RNA component (M1 or rnpB) and a protein subunit.

It carries out the reaction Endonucleolytic cleavage of RNA, removing 5'-extranucleotides from tRNA precursor.. In terms of biological role, RNaseP catalyzes the removal of the 5'-leader sequence from pre-tRNA to produce the mature 5'-terminus. It can also cleave other RNA substrates such as 4.5S RNA. The protein component plays an auxiliary but essential role in vivo by binding to the 5'-leader sequence and broadening the substrate specificity of the ribozyme. This is Ribonuclease P protein component from Nitrosomonas europaea (strain ATCC 19718 / CIP 103999 / KCTC 2705 / NBRC 14298).